A 536-amino-acid chain; its full sequence is Protein Rep68 (536 aa).

The PV NS1-Nuc domain occupies 1 to 199 (MPGFYEIVIK…AQHLTHVSQT (199 aa)). The a divalent metal cation site is built by E83, H90, and H92. The short motif at 90-92 (HMH) is the RCR-2 element. Y156 (for nuclease activity) is an active-site residue. The short motif at 156–160 (YLLPK) is the RCR-3 element. Residues 196–211 (VSQTQEQNKENQNPNS) show a composition bias toward polar residues. Positions 196–216 (VSQTQEQNKENQNPNSDAPVI) are disordered. An SF3 helicase domain is found at 308-463 (DPQYAASVFL…LDHDFGKVTK (156 aa)). 334–341 (GPATTGKT) contributes to the ATP binding site. The tract at residues 488–536 (KGGAKKRPAPSDADISEPKRVRESVAQPSTSDAEASINYADRLARGHSL) is disordered.

Interacts with host TOPORS. Interacts with host KCTD5. Requires a divalent metal cation as cofactor.

It is found in the host nucleus. It catalyses the reaction ATP + H2O = ADP + phosphate + H(+). In terms of biological role, plays an essential role in the initiation of viral DNA synthesis. Binds specifically to an inverted terminal repeat element (ITR) on the 3' and 5' ends of the viral DNA, where it cleaves a site specifically to generate a priming site for initiation of the synthesis of a complementary strand. Also plays a role as transcriptional regulator, DNA helicase and as key factor in site-specific integration of the viral genome. Inhibits the host cell cycle G1/S and G2/M transitions. These arrests may provide essential cellular factors for viral DNA replication. The protein is Protein Rep68 (Rep68) of Mammalia (AAV-2).